Reading from the N-terminus, the 552-residue chain is Urocanate hydratase (552 aa).

Residues 48 to 49 (GG), Gln-126, 172 to 174 (GMG), Asp-192, 238 to 239 (NA), 259 to 263 (QTSAH), 268 to 269 (YL), and Tyr-317 each bind NAD(+). Residue Cys-405 is part of the active site. Gly-487 is a binding site for NAD(+).

This sequence belongs to the urocanase family. Requires NAD(+) as cofactor.

It localises to the cytoplasm. It carries out the reaction 4-imidazolone-5-propanoate = trans-urocanate + H2O. It functions in the pathway amino-acid degradation; L-histidine degradation into L-glutamate; N-formimidoyl-L-glutamate from L-histidine: step 2/3. Catalyzes the conversion of urocanate to 4-imidazolone-5-propionate. The sequence is that of Urocanate hydratase from Streptomyces griseus subsp. griseus (strain JCM 4626 / CBS 651.72 / NBRC 13350 / KCC S-0626 / ISP 5235).